A 521-amino-acid polypeptide reads, in one-letter code: Forkhead box protein N4 (521 aa).

Residues 197 to 293 (KPIYSYSCLI…EEMHKWKRKD (97 aa)) constitute a DNA-binding region (fork-head). The interval 371–406 (PQAHLAPDSPAPAQTPPLHALPSLSPGPLPQPAMGR) is disordered.

As to expression, mainly expressed in proliferator progenitor cells in brain and retina rather than differentiated cells. In contrast, is expressed only in postmitotic epithelial cells rather than in proliferative progenitors in the proximal airway.

The protein resides in the nucleus. In terms of biological role, transcription factor essential for neural and some non-neural tissues development, such as retina and lung respectively. Binds to an 11-bp consensus sequence containing the invariant tetranucleotide 5'-ACGC-3'. During development of the central nervous system, is required to specify the amacrine and horizontal cell fates from multipotent retinal progenitors while suppressing the alternative photoreceptor cell fates through activating DLL4-NOTCH signaling. Also acts synergistically with ASCL1/MASH1 to activate DLL4-NOTCH signaling and drive commitment of p2 progenitors to the V2b interneuron fates during spinal cord neurogenesis. In development of non-neural tissues, plays an essential role in the specification of the atrioventricular canal and is indirectly required for patterning the distal airway during lung development. This Mus musculus (Mouse) protein is Forkhead box protein N4 (Foxn4).